A 203-amino-acid polypeptide reads, in one-letter code: Imidazoleglycerol-phosphate dehydratase (203 aa).

The protein belongs to the imidazoleglycerol-phosphate dehydratase family.

It localises to the cytoplasm. The enzyme catalyses D-erythro-1-(imidazol-4-yl)glycerol 3-phosphate = 3-(imidazol-4-yl)-2-oxopropyl phosphate + H2O. It functions in the pathway amino-acid biosynthesis; L-histidine biosynthesis; L-histidine from 5-phospho-alpha-D-ribose 1-diphosphate: step 6/9. This chain is Imidazoleglycerol-phosphate dehydratase, found in Synechococcus sp. (strain RCC307).